Here is a 347-residue protein sequence, read N- to C-terminus: MKIADNTEHVCVSVKVWLCICSIGILLMVLVGGITRLTHSGLSITEWNPVIGIFPPVSEKEWIAEKMKYMSTPEFKCLNFNITFQEFKKLYLIEYFHRLLGRIVGLIFLLPFLYFTYKKKLNKNLIVNFIIICVLILFQGVMGWLMVKSGLIDRPHVSHYRLTAHLLLALLIFYLLWRQFLSAVILNVTCNLKINNTLIFYVISILIVIQITFGSLVAGLNAGLLHKTVPFLEGRFMLEDLLFMKPLWSNIFDNPITVQFIHEVIAVLILVIVSATLLILRLNFFPSYLLLVCLLIQLTFGILTFIYNVPIALASLHQVTAFILFAINTYLLHCVKLLKLQHVKFVS.

Transmembrane regions (helical) follow at residues Val-14–Ile-34, Tyr-95–Phe-115, Leu-125–Leu-145, Leu-166–Leu-186, Leu-198–Ala-218, Phe-260–Leu-280, Leu-289–Val-309, and Ile-311–Leu-331. Residue His-262 participates in heme binding. His-317 lines the heme pocket.

It belongs to the COX15/CtaA family. Type 2 subfamily. In terms of assembly, interacts with CtaB. Requires heme b as cofactor.

It is found in the cell membrane. The catalysed reaction is Fe(II)-heme o + 2 A + H2O = Fe(II)-heme a + 2 AH2. The protein operates within porphyrin-containing compound metabolism; heme A biosynthesis; heme A from heme O: step 1/1. In terms of biological role, catalyzes the conversion of heme O to heme A by two successive hydroxylations of the methyl group at C8. The first hydroxylation forms heme I, the second hydroxylation results in an unstable dihydroxymethyl group, which spontaneously dehydrates, resulting in the formyl group of heme A. The protein is Heme A synthase of Ehrlichia canis (strain Jake).